The chain runs to 545 residues: CTP synthase (545 aa).

Residues 1–266 form an amidoligase domain region; it reads MTKNYIFITG…DDYICNYFKL (266 aa). S14 is a binding site for CTP. S14 contacts UTP. ATP contacts are provided by residues 15 to 20 and D72; that span reads SLGKGI. Residues D72 and E140 each contribute to the Mg(2+) site. Residues 147–149, 187–192, and K223 contribute to the CTP site; these read DIE and KTKPTQ. UTP is bound by residues 187-192 and K223; that span reads KTKPTQ. 239 to 241 serves as a coordination point for ATP; sequence KDV. The 253-residue stretch at 291 to 543 folds into the Glutamine amidotransferase type-1 domain; it reads VIGIIGKYIK…IKSAGKHKKN (253 aa). Residue G352 coordinates L-glutamine. C379 (nucleophile; for glutamine hydrolysis) is an active-site residue. L-glutamine-binding positions include 380–383, E403, and R471; that span reads LGMQ. Active-site residues include H516 and E518.

This sequence belongs to the CTP synthase family. As to quaternary structure, homotetramer.

The catalysed reaction is UTP + L-glutamine + ATP + H2O = CTP + L-glutamate + ADP + phosphate + 2 H(+). It catalyses the reaction L-glutamine + H2O = L-glutamate + NH4(+). The enzyme catalyses UTP + NH4(+) + ATP = CTP + ADP + phosphate + 2 H(+). The protein operates within pyrimidine metabolism; CTP biosynthesis via de novo pathway; CTP from UDP: step 2/2. Allosterically activated by GTP, when glutamine is the substrate; GTP has no effect on the reaction when ammonia is the substrate. The allosteric effector GTP functions by stabilizing the protein conformation that binds the tetrahedral intermediate(s) formed during glutamine hydrolysis. Inhibited by the product CTP, via allosteric rather than competitive inhibition. In terms of biological role, catalyzes the ATP-dependent amination of UTP to CTP with either L-glutamine or ammonia as the source of nitrogen. Regulates intracellular CTP levels through interactions with the four ribonucleotide triphosphates. This is CTP synthase from Buchnera aphidicola subsp. Acyrthosiphon pisum (strain 5A).